We begin with the raw amino-acid sequence, 346 residues long: tRNA N6-adenosine threonylcarbamoyltransferase (346 aa).

Positions 111 and 115 each coordinate Fe cation. Substrate-binding positions include 134–138 (LVSGG), aspartate 167, glycine 180, aspartate 184, and asparagine 279. Fe cation is bound at residue aspartate 307.

Belongs to the KAE1 / TsaD family. Fe(2+) serves as cofactor.

Its subcellular location is the cytoplasm. It catalyses the reaction L-threonylcarbamoyladenylate + adenosine(37) in tRNA = N(6)-L-threonylcarbamoyladenosine(37) in tRNA + AMP + H(+). In terms of biological role, required for the formation of a threonylcarbamoyl group on adenosine at position 37 (t(6)A37) in tRNAs that read codons beginning with adenine. Is involved in the transfer of the threonylcarbamoyl moiety of threonylcarbamoyl-AMP (TC-AMP) to the N6 group of A37, together with TsaE and TsaB. TsaD likely plays a direct catalytic role in this reaction. In Gloeothece citriformis (strain PCC 7424) (Cyanothece sp. (strain PCC 7424)), this protein is tRNA N6-adenosine threonylcarbamoyltransferase.